The chain runs to 22 residues: Caerin-3.4 (22 aa).

Lys-22 is subject to Lysine amide.

In terms of tissue distribution, expressed by the skin parotoid and/or rostral glands.

The protein localises to the secreted. In terms of biological role, antibacterial peptide, that adopts an alpha helical conformation which can disrupt bacterial membranes. Each caerin displays a different antimicrobial specificity. This is Caerin-3.4 from Ranoidea caerulea (Green tree frog).